The following is a 356-amino-acid chain: (+)-(1(10)E,4E,6S,7R)-germacradien-6-ol synthase (356 aa).

Mg(2+) contacts are provided by aspartate 86 and aspartate 91. The DDXXXD motif signature appears at 86-91; the sequence is DDEYCD. A substrate-binding site is contributed by arginine 181. Asparagine 227 and serine 231 together coordinate Mg(2+). Lysine 234 is a binding site for substrate. Position 235 (glutamate 235) interacts with Mg(2+). 314–315 serves as a coordination point for substrate; it reads RY.

It belongs to the terpene synthase family. Mg(2+) is required as a cofactor.

The enzyme catalyses (2E,6E)-farnesyl diphosphate + H2O = (+)-(1(10)E,4E,6S,7R)-germacradien-6-ol + diphosphate. It functions in the pathway secondary metabolite biosynthesis; terpenoid biosynthesis. In terms of biological role, catalyzes the conversion of (2E,6E)-farnesyl diphosphate (FPP) to yield the sesquiterpene (+)-(1(10)E,4E,6S,7R)-germacradien-6-ol via a putative 1,10-cyclization, which could require the abstraction of the pyrophosphate from FPP to yield the (E,E)-germacradienyl cation. The only accepted substrate is farnesyl diphosphate (FPP). The chain is (+)-(1(10)E,4E,6S,7R)-germacradien-6-ol synthase from Streptomyces pratensis (strain ATCC 33331 / IAF-45CD).